Reading from the N-terminus, the 617-residue chain is Glutamyl-tRNA(Gln) amidotransferase subunit B, mitochondrial (617 aa).

A mitochondrion-targeting transit peptide spans 1 to 56 (MPRIPTSVLGKYLLSGQISRQGCVGARQITRHSALPSAAVSVANSARLLHVSSETV). The interval 53-90 (SETVPPPPAQPVPLRKQLKDEAKKAKKQGKKKSKGDSQ) is disordered. Positions 76-85 (KAKKQGKKKS) are enriched in basic residues.

It belongs to the GatB/GatE family. GatB subfamily. Subunit of the heterotrimeric GatCAB amidotransferase (AdT) complex, composed of A, B and C subunits.

The protein resides in the mitochondrion. The catalysed reaction is L-glutamyl-tRNA(Gln) + L-glutamine + ATP + H2O = L-glutaminyl-tRNA(Gln) + L-glutamate + ADP + phosphate + H(+). In terms of biological role, allows the formation of correctly charged Gln-tRNA(Gln) through the transamidation of misacylated Glu-tRNA(Gln) in the mitochondria. The reaction takes place in the presence of glutamine and ATP through an activated gamma-phospho-Glu-tRNA(Gln). The chain is Glutamyl-tRNA(Gln) amidotransferase subunit B, mitochondrial from Fusarium vanettenii (strain ATCC MYA-4622 / CBS 123669 / FGSC 9596 / NRRL 45880 / 77-13-4) (Fusarium solani subsp. pisi).